The chain runs to 342 residues: N-acetyl-gamma-glutamyl-phosphate reductase (342 aa).

Cysteine 146 is an active-site residue.

This sequence belongs to the NAGSA dehydrogenase family. Type 1 subfamily.

It localises to the cytoplasm. It carries out the reaction N-acetyl-L-glutamate 5-semialdehyde + phosphate + NADP(+) = N-acetyl-L-glutamyl 5-phosphate + NADPH + H(+). It participates in amino-acid biosynthesis; L-arginine biosynthesis; N(2)-acetyl-L-ornithine from L-glutamate: step 3/4. Functionally, catalyzes the NADPH-dependent reduction of N-acetyl-5-glutamyl phosphate to yield N-acetyl-L-glutamate 5-semialdehyde. In Thermobifida fusca (strain YX), this protein is N-acetyl-gamma-glutamyl-phosphate reductase.